The chain runs to 534 residues: Peptide chain release factor 3 (534 aa).

Residues 9-278 (SRRRTFAIIS…FFVEHAPSPQ (270 aa)) enclose the tr-type G domain. GTP contacts are provided by residues 18-25 (SHPDAGKT), 86-90 (DTPGH), and 140-143 (NKLD).

This sequence belongs to the TRAFAC class translation factor GTPase superfamily. Classic translation factor GTPase family. PrfC subfamily.

It localises to the cytoplasm. Its function is as follows. Increases the formation of ribosomal termination complexes and stimulates activities of RF-1 and RF-2. It binds guanine nucleotides and has strong preference for UGA stop codons. It may interact directly with the ribosome. The stimulation of RF-1 and RF-2 is significantly reduced by GTP and GDP, but not by GMP. This chain is Peptide chain release factor 3, found in Stenotrophomonas maltophilia (strain K279a).